Consider the following 677-residue polypeptide: Methionine--tRNA ligase (677 aa).

Residues 14-24 (PYANGSIHLGH) carry the 'HIGH' region motif. Zn(2+) is bound by residues Cys-145, Cys-148, Cys-158, and Cys-161. A 'KMSKS' region motif is present at residues 331 to 335 (KMSKS). Residue Lys-334 coordinates ATP. A tRNA-binding domain is found at 575 to 677 (AFAAVDLRIA…SGAKPGQRVK (103 aa)).

The protein belongs to the class-I aminoacyl-tRNA synthetase family. MetG type 1 subfamily. As to quaternary structure, homodimer. The cofactor is Zn(2+).

It localises to the cytoplasm. It carries out the reaction tRNA(Met) + L-methionine + ATP = L-methionyl-tRNA(Met) + AMP + diphosphate. Its function is as follows. Is required not only for elongation of protein synthesis but also for the initiation of all mRNA translation through initiator tRNA(fMet) aminoacylation. The sequence is that of Methionine--tRNA ligase from Pseudomonas aeruginosa (strain LESB58).